We begin with the raw amino-acid sequence, 332 residues long: Trace amine-associated receptor 1 (332 aa).

At 1-23 the chain is on the extracellular side; the sequence is MHLCHAITNISHRNSDWSREVQA. The N-linked (GlcNAc...) asparagine glycan is linked to Asn-9. The chain crosses the membrane as a helical span at residues 24 to 48; it reads SLYSLMSLIILATLVGNLIVIISIS. At 49 to 58 the chain is on the cytoplasmic side; that stretch reads HFKQLHTPTN. The chain crosses the membrane as a helical span at residues 59 to 80; sequence WLLHSMAIVDFLLGCLIMPCSM. The Extracellular portion of the chain corresponds to 81-95; that stretch reads VRTVERCWYFGEILC. Cys-95 and Cys-181 are joined by a disulfide. A helical transmembrane segment spans residues 96-118; that stretch reads KVHTSTDIMLSSASIFHLAFISI. Asp-102 contacts 2-phenylethylamine. At 119 to 138 the chain is on the cytoplasmic side; that stretch reads DRYCAVCDPLRYKAKINIST. The chain crosses the membrane as a helical span at residues 139–160; sequence ILVMILVSWSLPAVYAFGMIFL. The Extracellular portion of the chain corresponds to 161–187; it reads ELNLKGVEELYRSQVSDLGGCSPFFSK. The interval 174-185 is extracellular Loop 2 (ECL2); that stretch reads QVSDLGGCSPFF. A helical transmembrane segment spans residues 188-210; sequence VSGVLAFMTSFYIPGSVMLFVYY. At 211 to 246 the chain is on the cytoplasmic side; it reads RIYFIAKGQARSINRTNVQVGLEGKSQAPQSKETKA. Residues 247–270 traverse the membrane as a helical segment; sequence AKTLGIMVGVFLVCWCPFFLCTVL. Topologically, residues 271 to 283 are extracellular; it reads DPFLGYVIPPSLN. Residues 284-304 form a helical membrane-spanning segment; it reads DALYWFGYLNSALNPMVYAFF. Over 305–332 the chain is Cytoplasmic; the sequence is YPWFRRALKMVLLGKIFQKDSSRSKLFL.

This sequence belongs to the G-protein coupled receptor 1 family. In terms of tissue distribution, widely distributed throughout the brain. Strongly expressed in the mitral cell layer of the olfactory bulb, piriform cortex, the arcuate, motor, and mesencephalic trigeminal nuclei, lateral reticular and hypoglossal nuclei, cerebellar Purkinje cells, and ventral horn of the spinal cord. Moderately expressed in the frontal, entorhinal, and agranular cortices, the ventral pallidum, thalamus, hippocampus, several hypothalamic nuclei, ambiguus, dorsal raphe, and gigantocellular reticular nuclei. Weakly expressed in the septum, basal ganglia, amygdala, myelencephalon, and spinal cord dorsal horn. Particularly interesting is the moderate expression in several monoaminergic cell groups, namely the dorsal raphe, the locus coeruleus, and the ventral tegmental area.

The protein resides in the endomembrane system. It localises to the endoplasmic reticulum membrane. Its subcellular location is the cell membrane. Activated by SEP-363856 small molecule: IHCH-7179 acts both as an agonist activator for HTR1A and TAAR1. In terms of biological role, intracellular G-protein coupled receptor for trace amines, which recognizes endogenous amine-containing metabolites such as beta-phenylethylamine (beta-PEA), 3-iodothyronamine (T1AM), isoamylamine (IAA), cadaverine (CAD), cyclohexylamine (CHA), p-tyramine (p-TYR), trimethylamine (TMA), octopamine and tryptamine. Also functions as a receptor for various drugs and psychoactive substances, such as amphetamine and methamphetamine. Unresponsive to classical biogenic amines, such as epinephrine and histamine and only partially activated by dopamine and serotonin. Expressed in both the central and peripheral nervous system: TAAR1 activation regulates the activity of several neurotransmitter signaling pathways by (1) decreasing the basal firing rates of the neurons involved and by (2) lowering the sensitivity of receptors to neurotransmitters. Ligand binding causes a conformation change that triggers signaling via guanine nucleotide-binding proteins (G proteins) and modulates the activity of downstream effectors. TAAR1 is coupled with different G(i)/G(o)-, G(s)- or G(q)/G(11) classes of G alpha proteins depending on the ligand. CAD-binding is coupled to G(i)/G(o) G alpha proteins and mediates inhibition of adenylate cyclase activity. T1AM- or beta-PEA-binding is coupled to G(s) G alpha proteins and mediates activation of adenylate cyclase activity. CHA- or IAA-binding is coupled to G(q)/G(11) G alpha proteins and activates phospholipase C-beta, releasing diacylglycerol (DAG) and inositol 1,4,5-trisphosphate (IP3) second messengers. TMA-binding is coupled with all three G(i)/G(o)-, G(s)- or G(q)/G(11) G alpha protein subtypes. This Mus musculus (Mouse) protein is Trace amine-associated receptor 1.